Consider the following 108-residue polypeptide: Large ribosomal subunit protein bL21c (108 aa).

The protein belongs to the bacterial ribosomal protein bL21 family. In terms of assembly, part of the 50S ribosomal subunit.

Its subcellular location is the plastid. The protein resides in the chloroplast. Functionally, this protein binds to 23S rRNA. This Cyanidium caldarium (Red alga) protein is Large ribosomal subunit protein bL21c.